The chain runs to 144 residues: 3-hydroxyacyl-[acyl-carrier-protein] dehydratase FabZ (144 aa).

Residue H48 is part of the active site.

It belongs to the thioester dehydratase family. FabZ subfamily.

It is found in the cytoplasm. The catalysed reaction is a (3R)-hydroxyacyl-[ACP] = a (2E)-enoyl-[ACP] + H2O. Its function is as follows. Involved in unsaturated fatty acids biosynthesis. Catalyzes the dehydration of short chain beta-hydroxyacyl-ACPs and long chain saturated and unsaturated beta-hydroxyacyl-ACPs. The protein is 3-hydroxyacyl-[acyl-carrier-protein] dehydratase FabZ of Bacillus cytotoxicus (strain DSM 22905 / CIP 110041 / 391-98 / NVH 391-98).